Reading from the N-terminus, the 433-residue chain is Enolase (433 aa).

An N-acetylserine modification is found at Ser-1. The (2R)-2-phosphoglycerate site is built by Ser-36 and His-157. The active-site Proton donor is the Glu-209. Asp-244, Glu-294, and Asp-319 together coordinate Mn(2+). The (2R)-2-phosphoglycerate site is built by Lys-344, Arg-373, and Ser-374. The active-site Proton acceptor is Lys-344.

Belongs to the enolase family. In terms of assembly, homodimer. Requires Mg(2+) as cofactor.

It is found in the cytoplasm. It carries out the reaction (2R)-2-phosphoglycerate = phosphoenolpyruvate + H2O. The protein operates within carbohydrate degradation; glycolysis; pyruvate from D-glyceraldehyde 3-phosphate: step 4/5. Its activity is regulated as follows. Inhibited by 2-phosphoglycolic acid. In Homarus gammarus (European lobster), this protein is Enolase.